Reading from the N-terminus, the 228-residue chain is Ribonuclease HII (228 aa).

Positions 26-214 (RAVAGVDEVG…VRAHSRFPLD (189 aa)) constitute an RNase H type-2 domain. Residues Asp-32, Glu-33, and Asp-124 each contribute to the a divalent metal cation site.

It belongs to the RNase HII family. Requires Mn(2+) as cofactor. The cofactor is Mg(2+).

It localises to the cytoplasm. It catalyses the reaction Endonucleolytic cleavage to 5'-phosphomonoester.. Functionally, endonuclease that specifically degrades the RNA of RNA-DNA hybrids. This Solibacter usitatus (strain Ellin6076) protein is Ribonuclease HII.